Consider the following 125-residue polypeptide: Profilin-P (125 aa).

N-acetylserine is present on Ser2.

This sequence belongs to the profilin family. In terms of assembly, occurs in many kinds of cells as a complex with monomeric actin in a 1:1 ratio.

It is found in the cytoplasm. The protein localises to the cytoskeleton. Functionally, binds to actin and affects the structure of the cytoskeleton. At high concentrations, profilin prevents the polymerization of actin, whereas it enhances it at low concentrations. By binding to PIP2, it inhibits the formation of IP3 and DG. This chain is Profilin-P (PROP), found in Physarum polycephalum (Slime mold).